Consider the following 185-residue polypeptide: NEDD8-conjugating enzyme UBE2F (185 aa).

Methionine 1 is subject to N-acetylmethionine. The tract at residues 1 to 29 is interaction with UBA3; the sequence is MLTLASKLKRDDGLKGSRTAATASDSTRR. Residues 32–185 form the UBC core domain; the sequence is VRDKLLVKEV…VDDYIKRYAR (154 aa). Cysteine 116 (glycyl thioester intermediate) is an active-site residue.

This sequence belongs to the ubiquitin-conjugating enzyme family. UBE2F subfamily. Interacts with UBA3 and RBX2. Interacts (N-terminally acetylated form) with (via DCUN1 domain) DCUN1D1, DCUN1D2, DCUN1D3, DCUN1D4 and DCUN1D5. Post-translationally, the acetylation of Met-1 increases affinity for DCUN1D3 by about 2 orders of magnitude and is crucial for NEDD8 transfer to cullins. In terms of tissue distribution, widely expressed (at protein level).

The enzyme catalyses [E1 NEDD8-activating enzyme]-S-[NEDD8 protein]-yl-L-cysteine + [E2 NEDD8-conjugating enzyme]-L-cysteine = [E1 NEDD8-activating enzyme]-L-cysteine + [E2 NEDD8-conjugating enzyme]-S-[NEDD8-protein]-yl-L-cysteine.. Its pathway is protein modification; protein neddylation. In terms of biological role, accepts the ubiquitin-like protein NEDD8 from the UBA3-NAE1 E1 complex and catalyzes its covalent attachment to other proteins. Together with the E3 ubiquitin ligase RNF7/RBX2, specifically neddylates cullin-5 (CUL5). Does not neddylate CUL1, CUL2, CUL3, CUL4A or CUL4B. Mediates neddylation of the CUL9-RBX1 complex. Functionally, (Microbial infection) Following infection by HIV-1 virus, participates to HIV-1 Vif protein-mediated ubiquitination and degradation of APOBEC3G by mediating neddylation of cullin-5 (CUL5). This is NEDD8-conjugating enzyme UBE2F (UBE2F) from Homo sapiens (Human).